The chain runs to 130 residues: Ribonuclease VapC46 (130 aa).

The region spanning 4–118 (IYLDSSAIVK…CTYDDRMRDA (115 aa)) is the PINc domain. Mg(2+) is bound by residues Asp-7 and Asp-91.

The protein belongs to the PINc/VapC protein family. It depends on Mg(2+) as a cofactor.

Its function is as follows. Toxic component of a type II toxin-antitoxin (TA) system. An RNase. Upon expression in M.smegmatis inhibits colony formation. Its toxic effect is neutralized by coexpression with cognate antitoxin VapB46. This Mycobacterium tuberculosis (strain ATCC 25618 / H37Rv) protein is Ribonuclease VapC46.